Here is a 427-residue protein sequence, read N- to C-terminus: Adenylosuccinate synthetase (427 aa).

GTP-binding positions include 12 to 18 (GDEGKGK) and 40 to 42 (GHT). D13 functions as the Proton acceptor in the catalytic mechanism. D13 and G40 together coordinate Mg(2+). IMP is bound by residues 13–16 (DEGK), 38–41 (NAGH), T130, R144, Q224, T239, and R303. H41 (proton donor) is an active-site residue. 299 to 305 (SVTGRPR) provides a ligand contact to substrate. Residues R305, 331–333 (KLD), and 411–413 (SVG) contribute to the GTP site.

Belongs to the adenylosuccinate synthetase family. As to quaternary structure, homodimer. The cofactor is Mg(2+).

It is found in the cytoplasm. It carries out the reaction IMP + L-aspartate + GTP = N(6)-(1,2-dicarboxyethyl)-AMP + GDP + phosphate + 2 H(+). It participates in purine metabolism; AMP biosynthesis via de novo pathway; AMP from IMP: step 1/2. Plays an important role in the de novo pathway of purine nucleotide biosynthesis. Catalyzes the first committed step in the biosynthesis of AMP from IMP. In Sorangium cellulosum (strain So ce56) (Polyangium cellulosum (strain So ce56)), this protein is Adenylosuccinate synthetase.